Here is a 190-residue protein sequence, read N- to C-terminus: High affinity copper uptake protein 1 (190 aa).

The interval M1–G35 is disordered. The Extracellular portion of the chain corresponds to M1–L61. Residues H5 to H6 carry the Bis-His motif motif. The short motif at M7–M12 is the Methionine segments (Mets) motif element. N15 carries N-linked (GlcNAc...) asparagine glycosylation. Residues T26–G35 show a composition bias toward low complexity. O-linked (GalNAc...) threonine glycosylation is present at T27. A helical membrane pass occupies residues V62–F82. The Cytoplasmic segment spans residues Y83–H132. T114 is modified (phosphothreonine). Residues L133 to F153 traverse the membrane as a helical segment. Residues M154 to Y156 lie on the Extracellular side of the membrane. Residues N157–W177 traverse the membrane as a helical segment. At K178–H190 the chain is on the cytoplasmic side. Residue C189 is modified to Cysteine sulfenic acid (-SOH).

Belongs to the copper transporter (Ctr) (TC 1.A.56) family. SLC31A subfamily. In terms of assembly, homotrimer; is stabilized by cisplatin via interactions between cisplatin and the methionine-rich clusters, and could be crucial for the copper(2+) reduction process and copper(1+) stabilization. Heterotrimer between SLC31A1, CCS and SOD1; this heterotrimer is copper(1+)-mediated and its maintenance is regulated through SOD1 activation. Interacts with KDR; this interaction is induced upon VEGFA stimulation leading to SLC31A1 and KDR subsequent co-internalization to early endosomes, thereby activating KDR downstream signaling in endothelial cells. Interacts (via C-terminal domain) with ATOX1 (via dimer form); this interaction improves ATOX1 stability and controls intracellular copper(1+) levels. Interacts with SLC31A2; this interaction stabilizes SLC31A2 and protects its from ubiquitination and degradation. Interacts (via C-terminal domain) with CCS; this interaction is copper(1+)-mediated. Post-translationally, O-Glycosylation at Thr-27 protects from proteolytic cleavage in the N-terminal extracellular domain. In terms of processing, proteolytic cleavage, leading to a truncated form, is facilitated by SLC31A2 and initiated preferentially by CTSL and to a minor extend by CTSB in endolysosomal compartments. In vitro, is cleaved by CTSL/cathepsin L between residues 8 and 9 from the amino terminus. A post-CTSL/cathepsin L processing occurs to yield to the fully truncated form. Sulfenylated at Cys-189 after stimulation with VEGFA, which induces SLC31A1-KDR disulfide bond formation and their co-internalization to early endosomes, driving to a sustained VEGFR2 signaling.

Its subcellular location is the cell membrane. It is found in the early endosome membrane. It localises to the recycling endosome membrane. The protein resides in the apical cell membrane. The protein localises to the late endosome membrane. Its subcellular location is the basolateral cell membrane. It carries out the reaction Ag(+)(out) = Ag(+)(in). It catalyses the reaction Cu(+)(out) = Cu(+)(in). Its activity is regulated as follows. Copper(1+) transport is stimulated by extracellular acidic pH and high potassium ions concentrations. Copper(1+) import is regulated by a copper(1+)-dependent recycling of SLC31A1. Uniporter that mediates the transport of copper(1+) from the extracellular space to the cytoplasm, across the plasma membrane and delivers directly copper(1+) to specific chaperone such as ATOX1, via a copper(1+)- mediated transient interaction between the C-terminal domain and a copper(1+) chaperone, thus controlling intracellular copper(1+) levels. May function in copper(1+) import from the apical membrane thus may drive intestinal copper absorption. The copper(1+) transport mechanism is sodium-independent, saturable and of high-affinity. Also mediates the uptake of silver(1+). May function in the influx of the platinum-containing chemotherapeutic agents. The platinum-containing chemotherapeutic agents uptake is saturable. In vitro, mediates the transport of cadmium(2+) into cells. Also participates in the first step of copper(2+) acquisition by cells through a direct transfer of copper(2+) from copper(2+) carriers in blood, such as ALB to the N-terminal domain of SLC31A1, leading to copper(2+) reduction and probably followed by copper(1+) stabilization. In addition, functions as a redox sensor to promote angiogenesis in endothelial cells, in a copper(1+) transport independent manner, by transmitting the VEGF-induced ROS signal through a sulfenylation at Cys-189 leadin g to a subsequent disulfide bond formation between SLC31A1 and KDR. The SLC31A1-KDR complex is then co-internalized to early endosomes, driving a sustained VEGFR2 signaling. Functionally, mobilizes copper(1+) out of the endosomal compartment, making copper(1+) available for export out of the cells. This Homo sapiens (Human) protein is High affinity copper uptake protein 1.